The following is a 394-amino-acid chain: Na(+)/H(+) antiporter NhaA (394 aa).

11 helical membrane-spanning segments follow: residues 24–44, 58–78, 96–116, 126–146, 155–175, 180–200, 214–234, 267–287, 300–320, 336–356, and 370–390; these read AGLVLMACALAAIAVANSPLA, LSVQHWVNDGLMAVFFLLVGL, TLPGVAAVGGMAIPGIVYVML, GWAIPAATDIAFALGVMSLLG, IFLAALAIIDDLGAVIIIAIF, INVATLLGAVFVFGILRSLCA, AVLWVLLLVSGVHATLAGVLL, VAFAILPIFGFANAGVSFASI, VAAGLLIGKVVGIFGAVALMV, VLGVAFLCGIGFTMSLFIGLL, and GILAGSLLAGVLGYGILRIAG.

It belongs to the NhaA Na(+)/H(+) (TC 2.A.33) antiporter family.

It localises to the cell inner membrane. It catalyses the reaction Na(+)(in) + 2 H(+)(out) = Na(+)(out) + 2 H(+)(in). Its function is as follows. Na(+)/H(+) antiporter that extrudes sodium in exchange for external protons. This is Na(+)/H(+) antiporter NhaA from Azorhizobium caulinodans (strain ATCC 43989 / DSM 5975 / JCM 20966 / LMG 6465 / NBRC 14845 / NCIMB 13405 / ORS 571).